The sequence spans 287 residues: Spore wall protein 7 (287 aa).

The N-terminal stretch at 1–19 is a signal peptide; it reads MIKGLIYLFLFRCLEGRLA.

The protein belongs to the SWP7 family. Interacts with SWP9.

The protein resides in the cytoplasm. The protein localises to the spore wall. Its subcellular location is the spore polar tube. Functionally, involved in adherence of spores to the host cell surface and in infection efficiency. This chain is Spore wall protein 7 (SWP7), found in Nosema bombycis (strain CQ1 / CVCC 102059) (Microsporidian parasite).